The following is a 103-amino-acid chain: Large ribosomal subunit protein bL21 (103 aa).

Belongs to the bacterial ribosomal protein bL21 family. Part of the 50S ribosomal subunit. Contacts protein L20.

In terms of biological role, this protein binds to 23S rRNA in the presence of protein L20. The protein is Large ribosomal subunit protein bL21 of Mannheimia succiniciproducens (strain KCTC 0769BP / MBEL55E).